We begin with the raw amino-acid sequence, 141 residues long: Large ribosomal subunit protein uL11 (141 aa).

Belongs to the universal ribosomal protein uL11 family. As to quaternary structure, part of the ribosomal stalk of the 50S ribosomal subunit. Interacts with L10 and the large rRNA to form the base of the stalk. L10 forms an elongated spine to which L12 dimers bind in a sequential fashion forming a multimeric L10(L12)X complex. In terms of processing, one or more lysine residues are methylated.

Forms part of the ribosomal stalk which helps the ribosome interact with GTP-bound translation factors. The sequence is that of Large ribosomal subunit protein uL11 from Helicobacter hepaticus (strain ATCC 51449 / 3B1).